The following is a 51-amino-acid chain: MARFPEAEARIFRKLICMRCGATNPWGAKKCRKCGYKGLRPKAREPRGGGR.

Belongs to the eukaryotic ribosomal protein eL40 family.

The polypeptide is Large ribosomal subunit protein eL40 (Thermococcus gammatolerans (strain DSM 15229 / JCM 11827 / EJ3)).